The following is an 84-amino-acid chain: Small ribosomal subunit protein uS17 (84 aa).

This sequence belongs to the universal ribosomal protein uS17 family. Part of the 30S ribosomal subunit.

In terms of biological role, one of the primary rRNA binding proteins, it binds specifically to the 5'-end of 16S ribosomal RNA. The polypeptide is Small ribosomal subunit protein uS17 (Clostridium kluyveri (strain NBRC 12016)).